Reading from the N-terminus, the 217-residue chain is Cytidylate kinase (217 aa).

Residue 9–17 (GPAASGKSS) participates in ATP binding.

It belongs to the cytidylate kinase family. Type 1 subfamily.

It localises to the cytoplasm. It catalyses the reaction CMP + ATP = CDP + ADP. The catalysed reaction is dCMP + ATP = dCDP + ADP. This Bdellovibrio bacteriovorus (strain ATCC 15356 / DSM 50701 / NCIMB 9529 / HD100) protein is Cytidylate kinase.